The primary structure comprises 880 residues: Protein translocase subunit SecA (880 aa).

ATP contacts are provided by residues Gln-87, Gly-105–Thr-109, and Asp-501. 4 residues coordinate Zn(2+): Cys-864, Cys-866, Cys-875, and His-876.

Belongs to the SecA family. As to quaternary structure, monomer and homodimer. Part of the essential Sec protein translocation apparatus which comprises SecA, SecYEG and auxiliary proteins SecDF-YajC and YidC. Zn(2+) serves as cofactor.

It is found in the cell inner membrane. The protein localises to the cytoplasm. It catalyses the reaction ATP + H2O + cellular proteinSide 1 = ADP + phosphate + cellular proteinSide 2.. Part of the Sec protein translocase complex. Interacts with the SecYEG preprotein conducting channel. Has a central role in coupling the hydrolysis of ATP to the transfer of proteins into and across the cell membrane, serving both as a receptor for the preprotein-SecB complex and as an ATP-driven molecular motor driving the stepwise translocation of polypeptide chains across the membrane. In Orientia tsutsugamushi (strain Boryong) (Rickettsia tsutsugamushi), this protein is Protein translocase subunit SecA.